Reading from the N-terminus, the 434-residue chain is Histidine--tRNA ligase (434 aa).

The protein belongs to the class-II aminoacyl-tRNA synthetase family. Homodimer.

It is found in the cytoplasm. It catalyses the reaction tRNA(His) + L-histidine + ATP = L-histidyl-tRNA(His) + AMP + diphosphate + H(+). The sequence is that of Histidine--tRNA ligase from Chlorobium phaeobacteroides (strain BS1).